A 976-amino-acid polypeptide reads, in one-letter code: 5'-3' exoribonuclease 2 homolog (976 aa).

The segment at 264 to 281 adopts a CCHC-type zinc-finger fold; it reads RACELCGQYGHELKECRG. Over residues 411–420 the composition is skewed to basic and acidic residues; it reads DEERFKENQK. The tract at residues 411–442 is disordered; the sequence is DEERFKENQKNKKARMQQYGRGRGGRGRGRGQ. Residues 535-788 are interaction with paxt-1; the sequence is DIRLYESGWK…GICVLYEDPE (254 aa). The interval 815 to 976 is disordered; sequence WNERRDGRFN…GGYQGNSSWR (162 aa). Positions 856–866 are enriched in low complexity; it reads DRQGGNDNYRG.

Belongs to the 5'-3' exonuclease family. XRN2/RAT1 subfamily. In terms of assembly, interacts with paxt-1 (via N-terminus); the interaction is direct and results in stabilization of xrn-2 in the complex.

The protein localises to the nucleus. Functionally, possesses 5'-&gt;3' exoribonuclease activity. Plays a role in maintenance of steady-state concentration and turnover of microRNAs (miRNA) by degradation of mature miRNA. Degradation role is enhanced when in complex with paxt-1. Partially redundant to xrn-1 in miRNA guide strand degradation. Implicated in differential regulation of mRNAs such as let-7 by controlling the accumulation of mature miRNA. Positively regulates molting of the pharyngeal cuticle. This Caenorhabditis briggsae protein is 5'-3' exoribonuclease 2 homolog.